The sequence spans 318 residues: Glycine--tRNA ligase alpha subunit (318 aa).

The disordered stretch occupies residues 298 to 318 (EAGGSSPSTSRQGEAPRGESQ). A compositionally biased stretch (polar residues) spans 300–309 (GGSSPSTSRQ).

The protein belongs to the class-II aminoacyl-tRNA synthetase family. In terms of assembly, tetramer of two alpha and two beta subunits.

Its subcellular location is the cytoplasm. It catalyses the reaction tRNA(Gly) + glycine + ATP = glycyl-tRNA(Gly) + AMP + diphosphate. The polypeptide is Glycine--tRNA ligase alpha subunit (Rhodopseudomonas palustris (strain BisB18)).